Here is a 321-residue protein sequence, read N- to C-terminus: Ferrochelatase (321 aa).

The Fe cation site is built by His194 and Glu275.

Belongs to the ferrochelatase family.

The protein localises to the cytoplasm. It catalyses the reaction heme b + 2 H(+) = protoporphyrin IX + Fe(2+). It participates in porphyrin-containing compound metabolism; protoheme biosynthesis; protoheme from protoporphyrin-IX: step 1/1. Its function is as follows. Catalyzes the ferrous insertion into protoporphyrin IX. The sequence is that of Ferrochelatase from Wigglesworthia glossinidia brevipalpis.